The chain runs to 219 residues: Albonoursin synthase (219 aa).

This sequence belongs to the nitroreductase family. In terms of assembly, homomer. It depends on FMN as a cofactor. In terms of processing, the N-terminus is blocked.

It localises to the cytoplasm. The catalysed reaction is cyclo(L-phenylalanyl-L-leucyl) + 2 O2 = albonoursin + 2 H2O2. Its function is as follows. Involved in the biosynthesis of albonoursin (cyclo[(alpha,beta-dehydro-Phe)-(alpha,beta-dehydro-Leu)]), an antibacterial peptide. Catalyzes the formation of alpha,beta-dehydro-Phe (DPhe) and alpha,beta-dehydro-Leu (DLeu) residues during the biosynthesis of albonoursin. The catalytic reaction of cyclo(L-Phe-L-Leu) occurs in a two-step sequential alpha-beta-dehydrogenation leading first to cyclo(alpha,beta-dehydro-Phe-L-Leu) and finally to albonoursin. Can also use cyclo(L-Phe-L-His), cyclo(L-Trp-L-Trp), cyclo(L-Leu-L-Ala), cyclo(L-Phe-Gly), cyclo(L-Leu-Gly), cyclo(L-Ser-Gly) and cyclo(L-Glu-Gly) as substrate suggesting that the diketopiperazine ring is essential for the enzymatic reaction. The chain is Albonoursin synthase (albA) from Streptomyces noursei (Streptomyces albulus).